Reading from the N-terminus, the 348-residue chain is Dihydroorotase (348 aa).

Histidine 17 and histidine 19 together coordinate Zn(2+). Substrate-binding positions include 19 to 21 (HLR) and asparagine 45. Zn(2+) is bound by residues lysine 103, histidine 140, and histidine 178. Lysine 103 carries the N6-carboxylysine modification. Histidine 140 contributes to the substrate binding site. A substrate-binding site is contributed by leucine 223. Zn(2+) is bound at residue aspartate 251. Residue aspartate 251 is part of the active site. 2 residues coordinate substrate: histidine 255 and alanine 267.

The protein belongs to the metallo-dependent hydrolases superfamily. DHOase family. Class II DHOase subfamily. Homodimer. The cofactor is Zn(2+).

It carries out the reaction (S)-dihydroorotate + H2O = N-carbamoyl-L-aspartate + H(+). Its pathway is pyrimidine metabolism; UMP biosynthesis via de novo pathway; (S)-dihydroorotate from bicarbonate: step 3/3. Catalyzes the reversible cyclization of carbamoyl aspartate to dihydroorotate. This is Dihydroorotase from Klebsiella pneumoniae (strain 342).